The sequence spans 207 residues: Urease accessory protein UreG (207 aa).

Residue 12-19 (GPVGAGKT) participates in GTP binding.

It belongs to the SIMIBI class G3E GTPase family. UreG subfamily. As to quaternary structure, homodimer. UreD, UreF and UreG form a complex that acts as a GTP-hydrolysis-dependent molecular chaperone, activating the urease apoprotein by helping to assemble the nickel containing metallocenter of UreC. The UreE protein probably delivers the nickel.

Its subcellular location is the cytoplasm. Functionally, facilitates the functional incorporation of the urease nickel metallocenter. This process requires GTP hydrolysis, probably effectuated by UreG. In Cereibacter sphaeroides (strain ATCC 17023 / DSM 158 / JCM 6121 / CCUG 31486 / LMG 2827 / NBRC 12203 / NCIMB 8253 / ATH 2.4.1.) (Rhodobacter sphaeroides), this protein is Urease accessory protein UreG.